We begin with the raw amino-acid sequence, 505 residues long: Glutamate--tRNA ligase (505 aa).

A 'HIGH' region motif is present at residues 12–22 (PSPTGDPHVGT). The short motif at 253–257 (KLSKR) is the 'KMSKS' region element. An ATP-binding site is contributed by K256.

This sequence belongs to the class-I aminoacyl-tRNA synthetase family. Glutamate--tRNA ligase type 1 subfamily. Monomer.

It is found in the cytoplasm. It carries out the reaction tRNA(Glu) + L-glutamate + ATP = L-glutamyl-tRNA(Glu) + AMP + diphosphate. Its function is as follows. Catalyzes the attachment of glutamate to tRNA(Glu) in a two-step reaction: glutamate is first activated by ATP to form Glu-AMP and then transferred to the acceptor end of tRNA(Glu). This is Glutamate--tRNA ligase from Chlamydophila psittaci (strain ATCC VR-125 / 6BC) (Chlamydia psittaci).